The following is a 426-amino-acid chain: Phosphoribosylamine--glycine ligase (426 aa).

The region spanning 109 to 312 (KEVMEAAGVA…LAGVLNAVAT (204 aa)) is the ATP-grasp domain. An ATP-binding site is contributed by 138–193 (LDYFGPMYVVKDDGLAAGKGVVVTADRAEARQHIHLVHAAGNPVLLESFLDGPEVS). The Mg(2+) site is built by Glu282 and Asn284.

Belongs to the GARS family. It depends on Mg(2+) as a cofactor. Mn(2+) serves as cofactor.

It catalyses the reaction 5-phospho-beta-D-ribosylamine + glycine + ATP = N(1)-(5-phospho-beta-D-ribosyl)glycinamide + ADP + phosphate + H(+). It functions in the pathway purine metabolism; IMP biosynthesis via de novo pathway; N(1)-(5-phospho-D-ribosyl)glycinamide from 5-phospho-alpha-D-ribose 1-diphosphate: step 2/2. The sequence is that of Phosphoribosylamine--glycine ligase from Corynebacterium ammoniagenes (Brevibacterium ammoniagenes).